Here is an 89-residue protein sequence, read N- to C-terminus: UPF0237 protein CPE1496 (89 aa).

The region spanning 4-84 (VITVVGKDKV…ISVQHEDIFN (81 aa)) is the ACT domain.

Belongs to the UPF0237 family.

The protein is UPF0237 protein CPE1496 of Clostridium perfringens (strain 13 / Type A).